A 119-amino-acid chain; its full sequence is Acidic phospholipase A2 CM-II (119 aa).

Intrachain disulfides connect Cys11-Cys71, Cys26-Cys118, Cys28-Cys44, Cys43-Cys99, Cys50-Cys92, Cys60-Cys85, and Cys78-Cys90. Ca(2+)-binding residues include Phe27, Gly29, and Gly31. His47 is an active-site residue. Residue Asp48 coordinates Ca(2+). The active site involves Asp93.

The protein belongs to the phospholipase A2 family. Group I subfamily. D49 sub-subfamily. It depends on Ca(2+) as a cofactor. As to expression, expressed by the venom gland.

The protein localises to the secreted. The catalysed reaction is a 1,2-diacyl-sn-glycero-3-phosphocholine + H2O = a 1-acyl-sn-glycero-3-phosphocholine + a fatty acid + H(+). PLA2 catalyzes the calcium-dependent hydrolysis of the 2-acyl groups in 3-sn-phosphoglycerides. The sequence is that of Acidic phospholipase A2 CM-II from Aspidelaps scutatus (Shield-nose snake).